The primary structure comprises 193 residues: Probable GTP-binding protein EngB (193 aa).

The region spanning 22–193 is the EngB-type G domain; that stretch reads LLPEVALAGR…AAWEAIYRHL (172 aa). GTP contacts are provided by residues 30–37, 57–61, 75–78, 142–145, and 174–176; these read GRSNVGKS, GKTQT, DVPG, TKLD, and FSS. Serine 37 and threonine 59 together coordinate Mg(2+).

The protein belongs to the TRAFAC class TrmE-Era-EngA-EngB-Septin-like GTPase superfamily. EngB GTPase family. Requires Mg(2+) as cofactor.

In terms of biological role, necessary for normal cell division and for the maintenance of normal septation. The protein is Probable GTP-binding protein EngB of Exiguobacterium sibiricum (strain DSM 17290 / CCUG 55495 / CIP 109462 / JCM 13490 / 255-15).